A 247-amino-acid polypeptide reads, in one-letter code: Phycobilisome rod-core linker polypeptide CpcG2 (247 aa).

Residues 11–189 (SSQNQRVPGY…YWRDKLENER (179 aa)) form the PBS-linker domain.

It belongs to the phycobilisome linker protein family. The phycobilisome is a hemidiscoidal structure that is composed of two distinct substructures: a core complex and a number of rods radiating from the core.

It localises to the cellular thylakoid membrane. Functionally, rod-core linker protein required for attachment of phycocyanin to allophycocyanin in cores of phycobilisomes. Linker polypeptides determine the state of aggregation and the location of the disk-shaped phycobiliprotein units within the phycobilisome and modulate their spectroscopic properties in order to mediate a directed and optimal energy transfer. In Mastigocladus laminosus (Fischerella sp.), this protein is Phycobilisome rod-core linker polypeptide CpcG2 (cpcG2).